We begin with the raw amino-acid sequence, 426 residues long: S-adenosylmethionine synthase (426 aa).

Residue His22 coordinates ATP. Residue Asp24 coordinates Mg(2+). Glu50 is a K(+) binding site. The L-methionine site is built by Glu63 and Gln106. Residues 106–116 (QSPDISQGVTA) are flexible loop. Residues 181–183 (DGK), 257–258 (KF), Asp266, 272–273 (RK), Ala289, and Lys293 each bind ATP. Residue Asp266 coordinates L-methionine. Lys297 contributes to the L-methionine binding site.

Belongs to the AdoMet synthase family. Homotetramer; dimer of dimers. The cofactor is Mg(2+). It depends on K(+) as a cofactor.

It localises to the cytoplasm. It carries out the reaction L-methionine + ATP + H2O = S-adenosyl-L-methionine + phosphate + diphosphate. It participates in amino-acid biosynthesis; S-adenosyl-L-methionine biosynthesis; S-adenosyl-L-methionine from L-methionine: step 1/1. Catalyzes the formation of S-adenosylmethionine (AdoMet) from methionine and ATP. The overall synthetic reaction is composed of two sequential steps, AdoMet formation and the subsequent tripolyphosphate hydrolysis which occurs prior to release of AdoMet from the enzyme. This Synechocystis sp. (strain ATCC 27184 / PCC 6803 / Kazusa) protein is S-adenosylmethionine synthase.